A 90-amino-acid polypeptide reads, in one-letter code: Phosphocarrier protein NPr (90 aa).

The HPr domain maps to 2–90 (TQYRRVAIKN…ALFESGFDED (89 aa)). Residue His-16 is the Pros-phosphohistidine intermediate of the active site.

This sequence belongs to the HPr family.

The protein localises to the cytoplasm. Functionally, component of the phosphoenolpyruvate-dependent nitrogen-metabolic phosphotransferase system (nitrogen-metabolic PTS), that seems to be involved in regulating nitrogen metabolism. The phosphoryl group from phosphoenolpyruvate (PEP) is transferred to the phosphoryl carrier protein NPr by enzyme I-Ntr. Phospho-NPr then transfers it to EIIA-Ntr. Could function in the transcriptional regulation of sigma-54 dependent operons in conjunction with the NPr (PtsO) and EIIA-Ntr (PtsN) proteins. This is Phosphocarrier protein NPr (ptsO) from Proteus mirabilis (strain HI4320).